A 141-amino-acid chain; its full sequence is MAIERTLSIIKPDAVAKNVIGQIYARFEAAGLKIVAAKMVHLSRGEAEQFYAVHKERPFFKDLVDFMVSGPVMIQALEGEGAIAKNRDLMGATDPKKADKGTIRADFADSIDANAVHGSDAAETAAVEIAFFFPGMNVYTR.

6 residues coordinate ATP: lysine 11, phenylalanine 59, arginine 87, threonine 93, arginine 104, and asparagine 114. The active-site Pros-phosphohistidine intermediate is histidine 117.

This sequence belongs to the NDK family. Homotetramer. The cofactor is Mg(2+).

The protein localises to the cytoplasm. The catalysed reaction is a 2'-deoxyribonucleoside 5'-diphosphate + ATP = a 2'-deoxyribonucleoside 5'-triphosphate + ADP. It catalyses the reaction a ribonucleoside 5'-diphosphate + ATP = a ribonucleoside 5'-triphosphate + ADP. Functionally, major role in the synthesis of nucleoside triphosphates other than ATP. The ATP gamma phosphate is transferred to the NDP beta phosphate via a ping-pong mechanism, using a phosphorylated active-site intermediate. In Cupriavidus pinatubonensis (strain JMP 134 / LMG 1197) (Cupriavidus necator (strain JMP 134)), this protein is Nucleoside diphosphate kinase.